Reading from the N-terminus, the 188-residue chain is Protein SSX5 (188 aa).

Residues 20–83 (KMQKAFDDIA…KRVADFQGND (64 aa)) form the KRAB-related domain. The disordered stretch occupies residues 78–188 (DFQGNDFDND…EISDPQEDDE (111 aa)). The span at 112 to 122 (TPEKPAEEGND) shows a compositional bias: basic and acidic residues. Positions 144–155 (KLNTSEKVNKTS) are enriched in polar residues. Residues 156–170 (GPKRGKHAWTHRVRE) are compositionally biased toward basic residues. Residues 179–188 (EISDPQEDDE) are compositionally biased toward acidic residues.

This sequence belongs to the SSX family.

Functionally, could act as a modulator of transcription. The chain is Protein SSX5 (SSX5) from Homo sapiens (Human).